A 477-amino-acid chain; its full sequence is Aspartyl/glutamyl-tRNA(Asn/Gln) amidotransferase subunit B (477 aa).

It belongs to the GatB/GatE family. GatB subfamily. As to quaternary structure, heterotrimer of A, B and C subunits.

It catalyses the reaction L-glutamyl-tRNA(Gln) + L-glutamine + ATP + H2O = L-glutaminyl-tRNA(Gln) + L-glutamate + ADP + phosphate + H(+). The enzyme catalyses L-aspartyl-tRNA(Asn) + L-glutamine + ATP + H2O = L-asparaginyl-tRNA(Asn) + L-glutamate + ADP + phosphate + 2 H(+). Functionally, allows the formation of correctly charged Asn-tRNA(Asn) or Gln-tRNA(Gln) through the transamidation of misacylated Asp-tRNA(Asn) or Glu-tRNA(Gln) in organisms which lack either or both of asparaginyl-tRNA or glutaminyl-tRNA synthetases. The reaction takes place in the presence of glutamine and ATP through an activated phospho-Asp-tRNA(Asn) or phospho-Glu-tRNA(Gln). This Coxiella burnetii (strain CbuK_Q154) (Coxiella burnetii (strain Q154)) protein is Aspartyl/glutamyl-tRNA(Asn/Gln) amidotransferase subunit B.